A 255-amino-acid chain; its full sequence is MPKLVVFSGAGLSAESGLETFRDNGGLWAQYDPMEVCNYENWLDNFELVHRFYNLRREELGKVQPNAMHKFLASLPMILNKPRIALSAKKKHKDPIEVIHITQNVDDLLERAGVSNVIHLHGELCKIICPQCEHIFDIGYTHFEPHNCPNCDYGKLKPFIVFFYERAPKYVIMHDIFSQLSSKDCVLVIGTSGNVVDISTILAFAESRARIGYKILNNLQYCPSIAESVFDKIFYKPTTQAIAEIEQELEQFFIS.

The Deacetylase sirtuin-type domain occupies 1-252 (MPKLVVFSGA…AEIEQELEQF (252 aa)). 9–28 (GAGLSAESGLETFRDNGGLW) contacts NAD(+). Substrate contacts are provided by tyrosine 53 and arginine 56. 103 to 106 (QNVD) provides a ligand contact to NAD(+). Residue histidine 121 is the Proton acceptor of the active site. Positions 129, 132, 148, and 151 each coordinate Zn(2+). Residues 190 to 192 (GTS), 218 to 220 (NLQ), and threonine 238 contribute to the NAD(+) site.

It belongs to the sirtuin family. Class III subfamily. It depends on Zn(2+) as a cofactor.

It is found in the cytoplasm. The enzyme catalyses N(6)-acetyl-L-lysyl-[protein] + NAD(+) + H2O = 2''-O-acetyl-ADP-D-ribose + nicotinamide + L-lysyl-[protein]. It carries out the reaction N(6)-succinyl-L-lysyl-[protein] + NAD(+) + H2O = 2''-O-succinyl-ADP-D-ribose + nicotinamide + L-lysyl-[protein]. Its function is as follows. NAD-dependent lysine deacetylase and desuccinylase that specifically removes acetyl and succinyl groups on target proteins. Modulates the activities of several proteins which are inactive in their acylated form. The protein is NAD-dependent protein deacylase of Helicobacter hepaticus (strain ATCC 51449 / 3B1).